Reading from the N-terminus, the 191-residue chain is 3-isopropylmalate dehydratase small subunit (191 aa).

It belongs to the LeuD family. LeuD type 1 subfamily. In terms of assembly, heterodimer of LeuC and LeuD.

It carries out the reaction (2R,3S)-3-isopropylmalate = (2S)-2-isopropylmalate. It participates in amino-acid biosynthesis; L-leucine biosynthesis; L-leucine from 3-methyl-2-oxobutanoate: step 2/4. Its function is as follows. Catalyzes the isomerization between 2-isopropylmalate and 3-isopropylmalate, via the formation of 2-isopropylmaleate. The sequence is that of 3-isopropylmalate dehydratase small subunit from Staphylococcus haemolyticus (strain JCSC1435).